The primary structure comprises 62 residues: uncharacterized protein (62 aa).

This is an uncharacterized protein from His1 virus (isolate Australia/Victoria) (His1V).